The sequence spans 705 residues: Double-strand break repair protein MRE11 (705 aa).

Mn(2+) contacts are provided by Asp-15, His-17, Asp-55, and Asn-122. Catalysis depends on His-123, which acts as the Proton donor. Residues His-220, His-248, and His-250 each contribute to the Mn(2+) site. Over residues 505 to 514 (RSLRSKEDSR) the composition is skewed to basic and acidic residues. The interval 505–705 (RSLRSKEDSR…TRNYGAVRRR (201 aa)) is disordered. 2 stretches are compositionally biased toward polar residues: residues 515–538 (FTSSSQNLDTGGRSVTAQSNLNSF) and 589–605 (SMKQTTLNFSQSRSSAA). Positions 641-663 (GRKRAAPRGGRGRGRGATAKRGR) are enriched in basic residues.

It belongs to the MRE11/RAD32 family. Component of the MRN complex composed of two heterodimers RAD50/MRE11 associated with a single NBS1. It depends on Mn(2+) as a cofactor.

Its subcellular location is the nucleus. It is found in the chromosome. Its function is as follows. Core component of the MRN complex, which plays a central role in double-strand break (DSB) repair, DNA recombination, maintenance of telomere integrity and meiosis. The MRN complex is involved in the repair of DNA double-strand breaks (DSBs) via homologous recombination (HR), an error-free mechanism which primarily occurs during S and G2 phases. The complex (1) mediates the end resection of damaged DNA, which generates proper single-stranded DNA, a key initial steps in HR, and is (2) required for the recruitment of other repair factors and efficient activation of ATM and ATR upon DNA damage. Within the MRN complex, MRE11 possesses both single-strand endonuclease activity and double-strand-specific 3'-5' exonuclease activity. MRE11 first endonucleolytically cleaves the 5' strand at DNA DSB ends to prevent non-homologous end joining (NHEJ) and licence HR. It then generates a single-stranded DNA gap via 3' to 5' exonucleolytic degradation, which is required for single-strand invasion and recombination. The chain is Double-strand break repair protein MRE11 from Oryza sativa subsp. indica (Rice).